The following is a 93-amino-acid chain: N-acetyl-S-hydroxy-L-cysteine reductase (93 aa).

Residues 1-93 form the Glutaredoxin domain; sequence MSDVVNIVVW…NHAQIKEAKR (93 aa). A disulfide bridge connects residues Cys15 and Cys18.

It belongs to the glutaredoxin family.

It carries out the reaction N-acetyl-S-hydroxy-L-cysteine + AH2 = N-acetyl-L-cysteine + A + H2O. Its pathway is amino-acid metabolism. Involved in a cysteine salvage pathway from S-alkylcysteine. Catalyzes the reduction of N-acetyl-S-hydroxy-L-cysteine (N-acetyl-L-cysteine sulfenic acid) to N-acetyl-L-cysteine. This pathway is likely important in the catabolism of alkylated cysteine generated by proteolysis of alkylated glutathione formed in the detoxification of a wide range of electrophiles. The chain is N-acetyl-S-hydroxy-L-cysteine reductase from Bacillus subtilis (strain 168).